A 386-amino-acid chain; its full sequence is Succinyl-diaminopimelate desuccinylase (386 aa).

Position 77 (histidine 77) interacts with Zn(2+). Residue aspartate 79 is part of the active site. Aspartate 110 contributes to the Zn(2+) binding site. Glutamate 144 (proton acceptor) is an active-site residue. 3 residues coordinate Zn(2+): glutamate 145, glutamate 173, and histidine 359.

Belongs to the peptidase M20A family. DapE subfamily. Homodimer. Zn(2+) serves as cofactor. It depends on Co(2+) as a cofactor.

It carries out the reaction N-succinyl-(2S,6S)-2,6-diaminopimelate + H2O = (2S,6S)-2,6-diaminopimelate + succinate. It participates in amino-acid biosynthesis; L-lysine biosynthesis via DAP pathway; LL-2,6-diaminopimelate from (S)-tetrahydrodipicolinate (succinylase route): step 3/3. Functionally, catalyzes the hydrolysis of N-succinyl-L,L-diaminopimelic acid (SDAP), forming succinate and LL-2,6-diaminopimelate (DAP), an intermediate involved in the bacterial biosynthesis of lysine and meso-diaminopimelic acid, an essential component of bacterial cell walls. This is Succinyl-diaminopimelate desuccinylase from Ralstonia pickettii (strain 12J).